Reading from the N-terminus, the 352-residue chain is Nicotinate-nucleotide--dimethylbenzimidazole phosphoribosyltransferase (352 aa).

Catalysis depends on Glu-318, which acts as the Proton acceptor.

The protein belongs to the CobT family.

The enzyme catalyses 5,6-dimethylbenzimidazole + nicotinate beta-D-ribonucleotide = alpha-ribazole 5'-phosphate + nicotinate + H(+). It participates in nucleoside biosynthesis; alpha-ribazole biosynthesis; alpha-ribazole from 5,6-dimethylbenzimidazole: step 1/2. Catalyzes the synthesis of alpha-ribazole-5'-phosphate from nicotinate mononucleotide (NAMN) and 5,6-dimethylbenzimidazole (DMB). In Azotobacter vinelandii (strain DJ / ATCC BAA-1303), this protein is Nicotinate-nucleotide--dimethylbenzimidazole phosphoribosyltransferase.